Reading from the N-terminus, the 386-residue chain is Ovalbumin (386 aa).

Glycine 2 is modified (N-acetylglycine). Residues 22-48 (HHANENIFYSPFTIISALAMVYLGAKD) constitute a signal peptide (not cleaved). Serine 69 carries the post-translational modification Phosphoserine. Cysteine 74 and cysteine 121 form a disulfide bridge. Residues asparagine 293 and asparagine 312 are each glycosylated (N-linked (GlcNAc...) asparagine). At serine 345 the chain carries Phosphoserine. An N-linked (GlcNAc...) asparagine glycan is attached at asparagine 372.

This sequence belongs to the serpin family. Ov-serpin subfamily. Post-translationally, the signal sequence is not cleaved. The functional signal for membrane translocation of ovalbumin becomes accessible when the nascent chain is 50 to 60 residues long. The hydrophobic sequence which lies between residues 27 and 43 folds back on the preceding residues to form an amphipathic hairpin structure which is the signal element recognized by the membrane. In terms of tissue distribution, major protein of egg white.

The protein resides in the secreted. Functionally, storage protein of egg white. Lack protease inhibitory activity. This is Ovalbumin (SERPINB14) from Meleagris gallopavo (Wild turkey).